Reading from the N-terminus, the 487-residue chain is N-succinylglutamate 5-semialdehyde dehydrogenase (487 aa).

NAD(+) is bound at residue 221–226; it reads GSSRTG. Catalysis depends on residues Glu244 and Cys278.

The protein belongs to the aldehyde dehydrogenase family. AstD subfamily.

It carries out the reaction N-succinyl-L-glutamate 5-semialdehyde + NAD(+) + H2O = N-succinyl-L-glutamate + NADH + 2 H(+). It participates in amino-acid degradation; L-arginine degradation via AST pathway; L-glutamate and succinate from L-arginine: step 4/5. Catalyzes the NAD-dependent reduction of succinylglutamate semialdehyde into succinylglutamate. This Pseudomonas entomophila (strain L48) protein is N-succinylglutamate 5-semialdehyde dehydrogenase.